We begin with the raw amino-acid sequence, 539 residues long: Protein pim1 (539 aa).

The disordered stretch occupies residues 1–53 (MTSNRSTRSSTKREEVSKNGVEKRELDESDVMKNGKKPVKRAKVSSLPKPVRV). The segment covering 11-33 (TKREEVSKNGVEKRELDESDVMK) has biased composition (basic and acidic residues). A compositionally biased stretch (basic residues) spans 34–43 (NGKKPVKRAK). 7 RCC1 repeats span residues 70-125 (RLNV…ALSH), 127-191 (GRVY…AITD), 192-243 (NGCC…ALTT), 244-296 (TGKV…AIDN), 298-353 (GRVY…ALLE), 354-417 (DGRV…AVTS), and 419-472 (GKVY…IAGI). The disordered stretch occupies residues 478–539 (EPVANGIKSE…SVLEPSSTTA (62 aa)). The span at 486 to 504 (SEPENEKKLKTEETSKTDD) shows a compositional bias: basic and acidic residues. Positions 514 to 525 (VTSNGEPSTATS) are enriched in polar residues.

Oligomer of dis3, pim1 and spi1. Interacts with ned1.

The protein localises to the nucleus. In terms of biological role, promotes the exchange of Ran(spi1)-bound GDP by GTP. Involved in the control of mitosis. Regulates a variety of nuclear events, including mitotic check-point, chromosome decondensation and mRNA processing/transport. The protein is Protein pim1 (pim1) of Schizosaccharomyces pombe (strain 972 / ATCC 24843) (Fission yeast).